The sequence spans 183 residues: Beta-defensin 129 (183 aa).

Residues 1-19 (MKLLFPIFASLMLQYQVNT) form the signal peptide. Intrachain disulfides connect Cys-27-Cys-53, Cys-34-Cys-48, and Cys-38-Cys-54. Residues 142–183 (ATSAKSNTKESGDSATASPPPAPPPPNILPTPSLELEEAEEQ) form a disordered region. The segment covering 159–170 (SPPPAPPPPNIL) has biased composition (pro residues).

It belongs to the beta-defensin family.

It localises to the secreted. Has antibacterial activity. This chain is Beta-defensin 129 (DEFB129), found in Macaca fascicularis (Crab-eating macaque).